The sequence spans 529 residues: [Pyruvate dehydrogenase [acetyl-transferring]]-phosphatase 2, mitochondrial (529 aa).

The N-terminal 66 residues, 1–66 (MSSTVSYWIL…FTLCKAYRHT (66 aa)), are a transit peptide targeting the mitochondrion. A PPM-type phosphatase domain is found at 106 to 517 (VLRFESNQLA…DDITVTVVYF (412 aa)). Positions 141, 142, 412, and 508 each coordinate Mn(2+).

It belongs to the PP2C family. Mg(2+) is required as a cofactor.

The protein resides in the mitochondrion. The enzyme catalyses O-phospho-L-seryl-[pyruvate dehydrogenase E1 alpha subunit] + H2O = L-seryl-[pyruvate dehydrogenase E1 alpha subunit] + phosphate. Mitochondrial enzyme that catalyzes the dephosphorylation and concomitant reactivation of the alpha subunit of the E1 component of the pyruvate dehydrogenase complex (PDC), thereby stimulating the conversion of pyruvate into acetyl-CoA. Acts as a crucial regulator of T cell metabolism and function, with a particular focus on T-helper Th17. This chain is [Pyruvate dehydrogenase [acetyl-transferring]]-phosphatase 2, mitochondrial, found in Homo sapiens (Human).